The chain runs to 676 residues: Symportin 1 (676 aa).

Residues 1–10 (MGKTRRNRVR) show a composition bias toward basic residues. Positions 1-28 (MGKTRRNRVRNRTDPIAKPVKPPTDPEL) are disordered. Residues 183 to 216 (TILRLLFRLISADIAPQDIYEEAISCLTTLSEDN) form an ARM 1 repeat. The disordered stretch occupies residues 325–385 (KGNQGSRESP…EDDEDDDDDS (61 aa)). Acidic residues-rich tracts occupy residues 338 to 354 (ADEEWNGFDDADGDAMD) and 363 to 385 (EDQEEDYEEIDVKEDDEDDDDDS). Residues 420–453 (TAVPQLIRLSNLPIDSDESLTIQSHALSALNNIS) form an ARM 2 repeat.

The protein belongs to the nuclear import and ribosome assembly adapter family. Component of a hexameric 5S RNP precursor complex, composed of 5S RNA, RRS1, RPF2, RPL5, RPL11 and SYO1; this complex acts as a precursor for ribosome assembly.

Involved in ribosomal large subunit assembly. This Chaetomium thermophilum (strain DSM 1495 / CBS 144.50 / IMI 039719) (Thermochaetoides thermophila) protein is Symportin 1.